Consider the following 312-residue polypeptide: DNA-directed RNA polymerase subunit alpha (312 aa).

Residues 1 to 229 form an alpha N-terminal domain (alpha-NTD) region; the sequence is MLQYQIDRIE…ELFQPLATVT (229 aa). An alpha C-terminal domain (alpha-CTD) region spans residues 245 to 312; that stretch reads QIPLEELNLS…ISIPQSRTSA (68 aa).

Belongs to the RNA polymerase alpha chain family. In cyanobacteria the RNAP catalytic core is composed of 2 alpha, 1 beta, 1 beta', 1 gamma and 1 omega subunit. When a sigma factor is associated with the core the holoenzyme is formed, which can initiate transcription.

It catalyses the reaction RNA(n) + a ribonucleoside 5'-triphosphate = RNA(n+1) + diphosphate. Functionally, DNA-dependent RNA polymerase catalyzes the transcription of DNA into RNA using the four ribonucleoside triphosphates as substrates. The chain is DNA-directed RNA polymerase subunit alpha from Prochlorococcus marinus (strain MIT 9313).